Consider the following 333-residue polypeptide: Transaldolase (333 aa).

The active-site Schiff-base intermediate with substrate is the K136.

This sequence belongs to the transaldolase family. Type 1 subfamily. In terms of assembly, homodimer.

The protein resides in the cytoplasm. The catalysed reaction is D-sedoheptulose 7-phosphate + D-glyceraldehyde 3-phosphate = D-erythrose 4-phosphate + beta-D-fructose 6-phosphate. It participates in carbohydrate degradation; pentose phosphate pathway; D-glyceraldehyde 3-phosphate and beta-D-fructose 6-phosphate from D-ribose 5-phosphate and D-xylulose 5-phosphate (non-oxidative stage): step 2/3. In terms of biological role, transaldolase is important for the balance of metabolites in the pentose-phosphate pathway. This Acidobacterium capsulatum (strain ATCC 51196 / DSM 11244 / BCRC 80197 / JCM 7670 / NBRC 15755 / NCIMB 13165 / 161) protein is Transaldolase.